Here is a 432-residue protein sequence, read N- to C-terminus: Mitochondrial distribution and morphology protein 12 (432 aa).

The SMP-LTD domain occupies 1–432 (MSIEVDWRAA…VFPSFWTFLI (432 aa)). Disordered stretches follow at residues 182 to 273 (WTDP…PRMR) and 354 to 377 (QQEA…PKRQ). The span at 214 to 234 (TSNPTSRPSTSSTLPSHPSAS) shows a compositional bias: low complexity. Composition is skewed to basic and acidic residues over residues 243–253 (TGKEHGSLAED) and 355–364 (QEARGQDDRP).

It belongs to the MDM12 family. Component of the ER-mitochondria encounter structure (ERMES) or MDM complex, composed of mmm1, mdm10, mdm12 and mdm34. A mmm1 homodimer associates with one molecule of mdm12 on each side in a pairwise head-to-tail manner, and the SMP-LTD domains of mmm1 and mdm12 generate a continuous hydrophobic tunnel for phospholipid trafficking.

It localises to the mitochondrion outer membrane. The protein resides in the endoplasmic reticulum membrane. Functionally, component of the ERMES/MDM complex, which serves as a molecular tether to connect the endoplasmic reticulum (ER) and mitochondria. Components of this complex are involved in the control of mitochondrial shape and protein biogenesis, and function in nonvesicular lipid trafficking between the ER and mitochondria. Mdm12 is required for the interaction of the ER-resident membrane protein MMM1 and the outer mitochondrial membrane-resident beta-barrel protein mdm10. The mdm12-mmm1 subcomplex functions in the major beta-barrel assembly pathway that is responsible for biogenesis of all mitochondrial outer membrane beta-barrel proteins, and acts in a late step after the SAM complex. The mdm10-mdm12-mmm1 subcomplex further acts in the TOM40-specific pathway after the action of the mdm12-mmm1 complex. Essential for establishing and maintaining the structure of mitochondria and maintenance of mtDNA nucleoids. The polypeptide is Mitochondrial distribution and morphology protein 12 (Aspergillus flavus (strain ATCC 200026 / FGSC A1120 / IAM 13836 / NRRL 3357 / JCM 12722 / SRRC 167)).